A 330-amino-acid chain; its full sequence is DNA-directed RNA polymerase subunit alpha (330 aa).

The interval 1-236 is alpha N-terminal domain (alpha-NTD); it reads MQGSVTEFLK…EQLDAFVDLR (236 aa). The tract at residues 250 to 330 is alpha C-terminal domain (alpha-CTD); the sequence is FDPILLRPVD…NWPPASIAED (81 aa).

The protein belongs to the RNA polymerase alpha chain family. As to quaternary structure, homodimer. The RNAP catalytic core consists of 2 alpha, 1 beta, 1 beta' and 1 omega subunit. When a sigma factor is associated with the core the holoenzyme is formed, which can initiate transcription.

The catalysed reaction is RNA(n) + a ribonucleoside 5'-triphosphate = RNA(n+1) + diphosphate. Its function is as follows. DNA-dependent RNA polymerase catalyzes the transcription of DNA into RNA using the four ribonucleoside triphosphates as substrates. The protein is DNA-directed RNA polymerase subunit alpha of Vibrio cholerae serotype O1 (strain ATCC 39315 / El Tor Inaba N16961).